The primary structure comprises 344 residues: uncharacterized protein (344 aa).

The segment at 304-344 (AVPAPTPRRPLDSVLQIRQTPEKGRNASDRNARETGWFSPP) is disordered. A compositionally biased stretch (basic and acidic residues) spans 323 to 336 (TPEKGRNASDRNAR).

This is an uncharacterized protein from Mycobacterium tuberculosis (strain CDC 1551 / Oshkosh).